A 175-amino-acid polypeptide reads, in one-letter code: NADH-ubiquinone oxidoreductase chain 6 (175 aa).

5 helical membrane passes run 1–21, 25–45, 47–67, 88–108, and 149–169; these read MVTYIVFVLSIIFVISFVGVS, SPIYGGLGLIVGGGAGCGVVL, FGGSFLGLMVFLIYLGGMLVV, VVLGAFILGLVVESLIVIYAL, and YGVWLVIVTGWSLFVSVVIIM.

Belongs to the complex I subunit 6 family. As to quaternary structure, core subunit of respiratory chain NADH dehydrogenase (Complex I) which is composed of 45 different subunits.

Its subcellular location is the mitochondrion inner membrane. It carries out the reaction a ubiquinone + NADH + 5 H(+)(in) = a ubiquinol + NAD(+) + 4 H(+)(out). In terms of biological role, core subunit of the mitochondrial membrane respiratory chain NADH dehydrogenase (Complex I) which catalyzes electron transfer from NADH through the respiratory chain, using ubiquinone as an electron acceptor. Essential for the catalytic activity and assembly of complex I. This is NADH-ubiquinone oxidoreductase chain 6 (MT-ND6) from Balaenoptera musculus (Blue whale).